The chain runs to 135 residues: Galectin-1 (135 aa).

The residue at position 2 (alanine 2) is an N-acetylalanine. Positions 4 to 135 (GLVASNLNLK…DFKIKCVAFE (132 aa)) constitute a Galectin domain. An N6-acetyllysine mark is found at lysine 13 and lysine 29. Serine 30 carries the post-translational modification Phosphoserine. A beta-D-galactoside is bound by residues 45-49 (HFNPR), histidine 53, asparagine 62, and 69-72 (WGAE). Position 108 is an N6-acetyllysine; alternate (lysine 108). Position 108 is an N6-succinyllysine; alternate (lysine 108). Position 128 is an N6-acetyllysine (lysine 128).

In terms of assembly, homodimer. Binds LGALS3BP. Interacts with CD2, CD3, CD4, CD6, CD7, CD43, ALCAM and CD45. Interacts with laminin (via poly-N-acetyllactosamine). Interacts with SUSD2. Interacts with cargo receptor TMED10; the interaction mediates the translocation from the cytoplasm into the ERGIC (endoplasmic reticulum-Golgi intermediate compartment) and thereby secretion.

Its subcellular location is the secreted. It is found in the extracellular space. The protein resides in the extracellular matrix. The protein localises to the cytoplasm. Lectin that binds beta-galactoside and a wide array of complex carbohydrates. Plays a role in regulating apoptosis, cell proliferation and cell differentiation. Inhibits CD45 protein phosphatase activity and therefore the dephosphorylation of Lyn kinase. Strong inducer of T-cell apoptosis. The chain is Galectin-1 (LGALS1) from Ovis aries (Sheep).